A 138-amino-acid chain; its full sequence is Acidic phospholipase A2 inhibitor chain HPD-1I (138 aa).

Residues Met1–Gly16 form the signal peptide. Cystine bridges form between Cys42–Cys131, Cys44–Cys60, Cys59–Cys111, Cys65–Cys138, Cys66–Cys104, Cys73–Cys97, and Cys91–Cys102.

In terms of assembly, heterodimer of an acidic and a basic chain; non-covalently linked. The basic chain is toxic and has phospholipase A2 activity (chain HDP-1P (AC Q1RP79) or HDP-2P (AC Q1RP78)) and the acidic chain is non-toxic and functions as its inhibitor (chain HPD-1I). Expressed by the venom gland.

It localises to the secreted. Functionally, heterodimer: slightly affects neuromuscular transmission acting presynaptically. It has a low catalytic activity, a low anticoagulant activity and weakly inhibits ADP-induced platelet aggregation. In terms of biological role, monomer: has no activity (neurotoxic, catalytic, anticoagulant and a ADP-induced platelet aggregation), but inhibits phospholipase A2. The chain is Acidic phospholipase A2 inhibitor chain HPD-1I from Vipera nikolskii (Nikolsky's adder).